The chain runs to 260 residues: Hydroxyethylthiazole kinase 2 (260 aa).

M40 provides a ligand contact to substrate. Positions 116 and 161 each coordinate ATP. Substrate is bound at residue A188.

Belongs to the Thz kinase family. It depends on Mg(2+) as a cofactor.

It catalyses the reaction 5-(2-hydroxyethyl)-4-methylthiazole + ATP = 4-methyl-5-(2-phosphooxyethyl)-thiazole + ADP + H(+). It functions in the pathway cofactor biosynthesis; thiamine diphosphate biosynthesis; 4-methyl-5-(2-phosphoethyl)-thiazole from 5-(2-hydroxyethyl)-4-methylthiazole: step 1/1. Catalyzes the phosphorylation of the hydroxyl group of 4-methyl-5-beta-hydroxyethylthiazole (THZ). The protein is Hydroxyethylthiazole kinase 2 of Oceanobacillus iheyensis (strain DSM 14371 / CIP 107618 / JCM 11309 / KCTC 3954 / HTE831).